The following is a 453-amino-acid chain: Ribosomal protein uS12 methylthiotransferase RimO (453 aa).

Residues 5-120 form the MTTase N-terminal domain; it reads PKVGFVSLGC…VMQAVHSHLP (116 aa). Positions 14, 50, 79, 151, 155, and 158 each coordinate [4Fe-4S] cluster. The region spanning 137–382 is the Radical SAM core domain; that stretch reads LTPRHYAYLK…MEVAEEVSAN (246 aa). The TRAM domain maps to 385–453; it reads QRKVGKTLKV…ADGHDLWGEV (69 aa).

Belongs to the methylthiotransferase family. RimO subfamily. Requires [4Fe-4S] cluster as cofactor.

Its subcellular location is the cytoplasm. It catalyses the reaction L-aspartate(89)-[ribosomal protein uS12]-hydrogen + (sulfur carrier)-SH + AH2 + 2 S-adenosyl-L-methionine = 3-methylsulfanyl-L-aspartate(89)-[ribosomal protein uS12]-hydrogen + (sulfur carrier)-H + 5'-deoxyadenosine + L-methionine + A + S-adenosyl-L-homocysteine + 2 H(+). Catalyzes the methylthiolation of an aspartic acid residue of ribosomal protein uS12. The polypeptide is Ribosomal protein uS12 methylthiotransferase RimO (Burkholderia lata (strain ATCC 17760 / DSM 23089 / LMG 22485 / NCIMB 9086 / R18194 / 383)).